A 341-amino-acid chain; its full sequence is NADH-quinone oxidoreductase subunit H (341 aa).

8 consecutive transmembrane segments (helical) span residues 6–26 (LIVS…LMAY), 76–96 (LVFL…AAVI), 118–138 (VAVL…ILGG), 157–177 (VISY…LSGS), 198–218 (LPNW…IAAV), 252–272 (FLAE…LFLG), 278–298 (FADG…FYVW), and 313–333 (GLAW…TGLV).

The protein belongs to the complex I subunit 1 family. As to quaternary structure, NDH-1 is composed of 14 different subunits. Subunits NuoA, H, J, K, L, M, N constitute the membrane sector of the complex.

It is found in the cell membrane. The catalysed reaction is a quinone + NADH + 5 H(+)(in) = a quinol + NAD(+) + 4 H(+)(out). Its function is as follows. NDH-1 shuttles electrons from NADH, via FMN and iron-sulfur (Fe-S) centers, to quinones in the respiratory chain. The immediate electron acceptor for the enzyme in this species is believed to be ubiquinone. Couples the redox reaction to proton translocation (for every two electrons transferred, four hydrogen ions are translocated across the cytoplasmic membrane), and thus conserves the redox energy in a proton gradient. This subunit may bind ubiquinone. This chain is NADH-quinone oxidoreductase subunit H, found in Thermomicrobium roseum (strain ATCC 27502 / DSM 5159 / P-2).